We begin with the raw amino-acid sequence, 44 residues long: Mu-conotoxin-like Cal 12.1.1e (44 aa).

4 disulfide bridges follow: Cys3–Cys16, Cys11–Cys28, Cys18–Cys33, and Cys27–Cys38. A 6'-bromotryptophan modification is found at Trp17. Pro23 carries the 4-hydroxyproline modification. 6'-bromotryptophan is present on residues Trp36 and Trp37. Position 39 is a 4-hydroxyproline (Pro39). The residue at position 43 (Trp43) is a 6'-bromotryptophan.

In terms of tissue distribution, expressed by the venom duct.

Its subcellular location is the secreted. Functionally, mu-conotoxins block voltage-gated sodium channels. This toxin reversibly blocks voltage-gated sodium channel in cephalopods, with no alteration in the voltage dependence of sodium conductance or on the kinetics of inactivation. This is Mu-conotoxin-like Cal 12.1.1e from Californiconus californicus (California cone).